The primary structure comprises 267 residues: Hydroxyacylglutathione hydrolase (267 aa).

Zn(2+)-binding residues include H55, H57, D59, H60, H121, D138, and H176.

The protein belongs to the metallo-beta-lactamase superfamily. Glyoxalase II family. Monomer. The cofactor is Zn(2+).

The enzyme catalyses an S-(2-hydroxyacyl)glutathione + H2O = a 2-hydroxy carboxylate + glutathione + H(+). It participates in secondary metabolite metabolism; methylglyoxal degradation; (R)-lactate from methylglyoxal: step 2/2. In terms of biological role, thiolesterase that catalyzes the hydrolysis of S-D-lactoyl-glutathione to form glutathione and D-lactic acid. The sequence is that of Hydroxyacylglutathione hydrolase from Shewanella oneidensis (strain ATCC 700550 / JCM 31522 / CIP 106686 / LMG 19005 / NCIMB 14063 / MR-1).